The sequence spans 84 residues: CDC42 small effector protein 2 (84 aa).

2 S-palmitoyl cysteine lipidation sites follow: cysteine 10 and cysteine 11. Residues 29 to 42 form the CRIB domain; sequence IGEPTNFVHTAHVG. Phosphoserine is present on residues serine 43 and serine 52.

This sequence belongs to the CDC42SE/SPEC family. In terms of assembly, interacts with CDC42 (in GTP-bound form). Interacts weakly with RAC1 and not at all with RHOA. As to expression, widely expressed. Expressed at higher level in T-lymphocytes. Highly expressed in CCRF-CEM T-lymphocytes, Jurkat T-lymphocytes, and Raji B-lymphocytes compared (at protein level).

It localises to the cytoplasm. The protein localises to the cytoskeleton. Its subcellular location is the cell membrane. It is found in the cell projection. The protein resides in the phagocytic cup. In terms of biological role, probably involved in the organization of the actin cytoskeleton by acting downstream of CDC42, inducing actin filament assembly. Alters CDC42-induced cell shape changes. In activated T-cells, may play a role in CDC42-mediated F-actin accumulation at the immunological synapse. May play a role in early contractile events in phagocytosis in macrophages. This Homo sapiens (Human) protein is CDC42 small effector protein 2 (CDC42SE2).